Here is a 272-residue protein sequence, read N- to C-terminus: Shikimate dehydrogenase (NADP(+)) (272 aa).

Shikimate contacts are provided by residues Ser14–Ser16 and Thr61. Lys65 functions as the Proton acceptor in the catalytic mechanism. Glu77 provides a ligand contact to NADP(+). Shikimate is bound by residues Asn86 and Asp102. NADP(+) is bound by residues Gly126–Ala130, Asn149–Arg154, and Met213. Residue Tyr215 coordinates shikimate. Gly237 lines the NADP(+) pocket.

Belongs to the shikimate dehydrogenase family. As to quaternary structure, homodimer.

The catalysed reaction is shikimate + NADP(+) = 3-dehydroshikimate + NADPH + H(+). The protein operates within metabolic intermediate biosynthesis; chorismate biosynthesis; chorismate from D-erythrose 4-phosphate and phosphoenolpyruvate: step 4/7. Functionally, involved in the biosynthesis of the chorismate, which leads to the biosynthesis of aromatic amino acids. Catalyzes the reversible NADPH linked reduction of 3-dehydroshikimate (DHSA) to yield shikimate (SA). The sequence is that of Shikimate dehydrogenase (NADP(+)) from Escherichia coli O127:H6 (strain E2348/69 / EPEC).